Here is a 139-residue protein sequence, read N- to C-terminus: GATA transcription factor 16 (139 aa).

Residues 32 to 86 form a GATA-type zinc finger; sequence NDKKKTCADCGTSKTPLWRGGPVGPKSLCNACGIRNRKKRRGGTEDNKKLKKSSS. The disordered stretch occupies residues 67–98; it reads NRKKRRGGTEDNKKLKKSSSGGGNRKFGESLK.

Belongs to the type IV zinc-finger family. Class B subfamily.

The protein resides in the nucleus. In terms of biological role, transcriptional regulator that specifically binds 5'-GATA-3' or 5'-GAT-3' motifs within gene promoters. In Arabidopsis thaliana (Mouse-ear cress), this protein is GATA transcription factor 16 (GATA16).